The sequence spans 308 residues: MAEKIKIGTMWLGGCSGCHLSIADFHEKLLDVMEHADFEFSPVLMDTKYDEIPELDVVVIEGGIVNDENREFAEELREKAKFVISYGTCAVYGGIPGLRNLWDKDEVIEEAYINSITTPNEEGVIPSEDVPHLEGRVKPLGEVIDVDFEVPGCPPRSDVAAEVVMALLKGEEIELPSTNLCEVCPREKPPEGLAMDFIKRQFEVGKPEDDLCLIPQGLICMGPATVSICGAECPSIAIPCRGCYGPTARVEDQGAKMISAIASDYKVEEDKTVDPEEVAEQLDDIVGTFYTFTLPAALIPMKIKKEGK.

The protein belongs to the [NiFe]/[NiFeSe] hydrogenase small subunit family. As to quaternary structure, the F420-non-reducing hydrogenase is composed of three subunits; MvhA, MvhD and MvhG. It forms a complex with the heterodisulfide reductase (hdr).

Functionally, part of a complex that provides reducing equivalents for heterodisulfide reductase. In Methanothermobacter marburgensis (strain ATCC BAA-927 / DSM 2133 / JCM 14651 / NBRC 100331 / OCM 82 / Marburg) (Methanobacterium thermoautotrophicum), this protein is F420-non-reducing hydrogenase subunit G (mvhG).